The chain runs to 879 residues: Metabotropic glutamate receptor 3 (879 aa).

An N-terminal signal peptide occupies residues 1–22 (MKMLTRLQVLMLALFSKGFLVS). Over 23-576 (LGDHNFMRRE…EDYIRWEDAW (554 aa)) the chain is Extracellular. Cys-57 and Cys-99 are oxidised to a cystine. L-glutamate contacts are provided by residues Ser-151 and 172–174 (AST). The N-linked (GlcNAc...) asparagine glycan is linked to Asn-209. Tyr-222 serves as a coordination point for L-glutamate. 7 disulfides stabilise this stretch: Cys-240–Cys-527, Cys-361–Cys-373, Cys-412–Cys-419, Cys-509–Cys-528, Cys-513–Cys-531, Cys-534–Cys-546, and Cys-549–Cys-562. N-linked (GlcNAc...) asparagine glycosylation is present at Asn-292. Asp-301 contacts L-glutamate. Lys-389 provides a ligand contact to L-glutamate. 2 N-linked (GlcNAc...) asparagine glycosylation sites follow: Asn-414 and Asn-439. The helical transmembrane segment at 577-599 (AIGPVTIACLGFMCTCIVITVFI) threads the bilayer. The Cytoplasmic segment spans residues 600–613 (KHNNTPLVKASGRE). The helical transmembrane segment at 614 to 634 (LCYILLFGVSLSYCMTFFFIA) threads the bilayer. At 635-645 (KPSPVICALRR) the chain is on the extracellular side. A helical membrane pass occupies residues 646–664 (LGLGTSFAICYSALLTKTN). Over 665–688 (CIARIFDGVKNGAQRPKFISPSSQ) the chain is Cytoplasmic. The helical transmembrane segment at 689–709 (VFICLGLILVQIVMVSVWLIL) threads the bilayer. Topologically, residues 710-734 (ETPGTRRYTLPEKRETVILKCNVKD) are extracellular. Residues 735–756 (SSMLISLTYDVVLVILCTVYAF) form a helical membrane-spanning segment. Residues 757–769 (KTRKCPENFNEAK) lie on the Cytoplasmic side of the membrane. A helical transmembrane segment spans residues 770–792 (FIGFTMYTTCIIWLAFLPIFYVT). The Extracellular segment spans residues 793–802 (SSDYRVQTTT). The helical transmembrane segment at 803 to 828 (MCISVSLSGFVVLGCLFAPKVHIVLF) threads the bilayer. The Cytoplasmic segment spans residues 829–879 (QPQKNVVTHRLHLNRFSVSGTATTYSQSSASTYVPTVCNGREVLDSTTSSL).

The protein belongs to the G-protein coupled receptor 3 family. Interacts with TAMALIN.

It is found in the cell membrane. G-protein coupled receptor for glutamate. Ligand binding causes a conformation change that triggers signaling via guanine nucleotide-binding proteins (G proteins) and modulates the activity of down-stream effectors. Signaling inhibits adenylate cyclase activity. This chain is Metabotropic glutamate receptor 3 (Grm3), found in Mus musculus (Mouse).